The sequence spans 343 residues: N-acetyl-gamma-glutamyl-phosphate reductase (343 aa).

Residue C147 is part of the active site.

It belongs to the NAGSA dehydrogenase family. Type 1 subfamily.

Its subcellular location is the cytoplasm. The enzyme catalyses N-acetyl-L-glutamate 5-semialdehyde + phosphate + NADP(+) = N-acetyl-L-glutamyl 5-phosphate + NADPH + H(+). Its pathway is amino-acid biosynthesis; L-arginine biosynthesis; N(2)-acetyl-L-ornithine from L-glutamate: step 3/4. In terms of biological role, catalyzes the NADPH-dependent reduction of N-acetyl-5-glutamyl phosphate to yield N-acetyl-L-glutamate 5-semialdehyde. The chain is N-acetyl-gamma-glutamyl-phosphate reductase from Listeria monocytogenes serovar 1/2a (strain ATCC BAA-679 / EGD-e).